A 114-amino-acid polypeptide reads, in one-letter code: Ribosome-binding factor A (114 aa).

This sequence belongs to the RbfA family. As to quaternary structure, monomer. Binds 30S ribosomal subunits, but not 50S ribosomal subunits or 70S ribosomes.

Its subcellular location is the cytoplasm. In terms of biological role, one of several proteins that assist in the late maturation steps of the functional core of the 30S ribosomal subunit. Associates with free 30S ribosomal subunits (but not with 30S subunits that are part of 70S ribosomes or polysomes). Required for efficient processing of 16S rRNA. May interact with the 5'-terminal helix region of 16S rRNA. The protein is Ribosome-binding factor A of Staphylococcus saprophyticus subsp. saprophyticus (strain ATCC 15305 / DSM 20229 / NCIMB 8711 / NCTC 7292 / S-41).